A 145-amino-acid chain; its full sequence is 3-hydroxyacyl-[acyl-carrier-protein] dehydratase FabZ (145 aa).

Residue His-49 is part of the active site.

This sequence belongs to the thioester dehydratase family. FabZ subfamily.

Its subcellular location is the cytoplasm. It catalyses the reaction a (3R)-hydroxyacyl-[ACP] = a (2E)-enoyl-[ACP] + H2O. Its function is as follows. Involved in unsaturated fatty acids biosynthesis. Catalyzes the dehydration of short chain beta-hydroxyacyl-ACPs and long chain saturated and unsaturated beta-hydroxyacyl-ACPs. This chain is 3-hydroxyacyl-[acyl-carrier-protein] dehydratase FabZ, found in Rickettsia typhi (strain ATCC VR-144 / Wilmington).